We begin with the raw amino-acid sequence, 301 residues long: WD repeat-containing protein SL1-17 (301 aa).

WD repeat units lie at residues 11–54, 59–98, 101–140, 143–182, 184–223, 227–266, and 269–300; these read AHKE…LKCL, GHRL…LTKT, GDPA…KEGS, LEGK…VQFL, GHAT…LVIP, GHKG…EKHC, and THED…IYQC.

The polypeptide is WD repeat-containing protein SL1-17 (Schistosoma mansoni (Blood fluke)).